A 265-amino-acid chain; its full sequence is Probable S-methyl-5'-thioinosine phosphorylase (265 aa).

Phosphate contacts are provided by residues serine 15 and arginine 55–histidine 56. Methionine 187 serves as a coordination point for substrate. Threonine 188 contributes to the phosphate binding site. Asparagine 211–alanine 213 is a substrate binding site.

It belongs to the PNP/MTAP phosphorylase family. MTAP subfamily. In terms of assembly, homotrimer.

The catalysed reaction is S-methyl-5'-thioinosine + phosphate = 5-(methylsulfanyl)-alpha-D-ribose 1-phosphate + hypoxanthine. It functions in the pathway purine metabolism; purine nucleoside salvage. Catalyzes the reversible phosphorylation of S-methyl-5'-thioinosine (MTI) to hypoxanthine and 5-methylthioribose-1-phosphate. Involved in the breakdown of S-methyl-5'-thioadenosine (MTA), a major by-product of polyamine biosynthesis. Catabolism of (MTA) occurs via deamination to MTI and phosphorolysis to hypoxanthine. The polypeptide is Probable S-methyl-5'-thioinosine phosphorylase (Thermodesulfovibrio yellowstonii (strain ATCC 51303 / DSM 11347 / YP87)).